We begin with the raw amino-acid sequence, 279 residues long: 4-hydroxy-3-methylbut-2-enyl diphosphate reductase (279 aa).

Cys12 provides a ligand contact to [4Fe-4S] cluster. Residues His36 and His70 each contribute to the (2E)-4-hydroxy-3-methylbut-2-enyl diphosphate site. His36 and His70 together coordinate dimethylallyl diphosphate. Isopentenyl diphosphate contacts are provided by His36 and His70. Cys92 contacts [4Fe-4S] cluster. His120 lines the (2E)-4-hydroxy-3-methylbut-2-enyl diphosphate pocket. His120 contributes to the dimethylallyl diphosphate binding site. His120 provides a ligand contact to isopentenyl diphosphate. Glu122 serves as the catalytic Proton donor. Thr158 provides a ligand contact to (2E)-4-hydroxy-3-methylbut-2-enyl diphosphate. Cys186 contacts [4Fe-4S] cluster. Positions 214, 215, 216, and 258 each coordinate (2E)-4-hydroxy-3-methylbut-2-enyl diphosphate. Dimethylallyl diphosphate is bound by residues Ser214, Ser215, Asn216, and Ser258. Residues Ser214, Ser215, Asn216, and Ser258 each contribute to the isopentenyl diphosphate site.

This sequence belongs to the IspH family. It depends on [4Fe-4S] cluster as a cofactor.

It catalyses the reaction isopentenyl diphosphate + 2 oxidized [2Fe-2S]-[ferredoxin] + H2O = (2E)-4-hydroxy-3-methylbut-2-enyl diphosphate + 2 reduced [2Fe-2S]-[ferredoxin] + 2 H(+). The enzyme catalyses dimethylallyl diphosphate + 2 oxidized [2Fe-2S]-[ferredoxin] + H2O = (2E)-4-hydroxy-3-methylbut-2-enyl diphosphate + 2 reduced [2Fe-2S]-[ferredoxin] + 2 H(+). The protein operates within isoprenoid biosynthesis; dimethylallyl diphosphate biosynthesis; dimethylallyl diphosphate from (2E)-4-hydroxy-3-methylbutenyl diphosphate: step 1/1. Its pathway is isoprenoid biosynthesis; isopentenyl diphosphate biosynthesis via DXP pathway; isopentenyl diphosphate from 1-deoxy-D-xylulose 5-phosphate: step 6/6. Its function is as follows. Catalyzes the conversion of 1-hydroxy-2-methyl-2-(E)-butenyl 4-diphosphate (HMBPP) into a mixture of isopentenyl diphosphate (IPP) and dimethylallyl diphosphate (DMAPP). Acts in the terminal step of the DOXP/MEP pathway for isoprenoid precursor biosynthesis. This Campylobacter fetus subsp. fetus (strain 82-40) protein is 4-hydroxy-3-methylbut-2-enyl diphosphate reductase.